The following is a 631-amino-acid chain: ATP-dependent zinc metalloprotease FtsH (631 aa).

The Stromal segment spans residues 1–2; sequence MK. The chain crosses the membrane as a helical span at residues 3-23; it reads ISWKNILLTLIPLGLISFLVW. Residues 24–118 are Lumenal-facing; it reads QGFNNTTNPQ…AHATNDSTPA (95 aa). Residues 119 to 139 form a helical membrane-spanning segment; it reads WSLIGNLIFPILLIAGLAFLF. Over 140–631 the chain is Stromal; it reads RRSSNLPGGP…IDYKSQLKST (492 aa). 213 to 220 contributes to the ATP binding site; that stretch reads GPPGTGKT. Histidine 434 contacts Zn(2+). Glutamate 435 is a catalytic residue. Positions 438 and 512 each coordinate Zn(2+).

In the central section; belongs to the AAA ATPase family. This sequence in the C-terminal section; belongs to the peptidase M41 family. In terms of assembly, homohexamer. Zn(2+) serves as cofactor.

It localises to the plastid. The protein resides in the chloroplast thylakoid membrane. Its function is as follows. Acts as a processive, ATP-dependent zinc metallopeptidase. The sequence is that of ATP-dependent zinc metalloprotease FtsH from Guillardia theta (Cryptophyte).